Reading from the N-terminus, the 1603-residue chain is Vitellogenin-3 (1603 aa).

An N-terminal signal peptide occupies residues 1–15 (MKSIIIASLVALAIA). The region spanning 24–685 (FSPKSEYVYK…EKNAFLPKEV (662 aa)) is the Vitellogenin domain. Asn-1266 carries N-linked (GlcNAc...) asparagine glycosylation. The 170-residue stretch at 1306–1475 (ATCKVGQSEV…SYLLKNEECE (170 aa)) folds into the VWFD domain. 2 cysteine pairs are disulfide-bonded: Cys-1308–Cys-1438 and Cys-1330–Cys-1474.

As to expression, expressed in the intestine of adult hermaphrodites.

The protein localises to the secreted. In terms of biological role, precursor of the egg-yolk proteins that are sources of nutrients during embryonic development. Together with other vitellogenins, may play a role in modulating life-span, acting via induction of autophagy and lysosomal lipolysis. In Caenorhabditis elegans, this protein is Vitellogenin-3 (vit-3).